The sequence spans 489 residues: Virion host shutoff protein (489 aa).

4 disordered regions span residues Glu-110–Asn-135, Ser-142–Ala-161, Arg-285–Glu-316, and Tyr-333–Pro-363. Residues Ile-124–Ser-134 are compositionally biased toward polar residues.

This sequence belongs to the herpesviridae VHS protein family. In terms of assembly, interacts with human EIF4H, EIF4A1 and EIF4A2; interaction with eIF4AI and EIF4A2 presumably allows Vhs protein to associate with the eIF4F cap-binding complex.

It is found in the virion. In terms of biological role, minor structural protein that acts as an endoribonuclease during lytic infection. Degrades host mRNAs in the cytoplasm by cutting them at preferred sites, including some in regions of translation initiation. Together with inhibition of host splicing by ICP27, contributes to an overall decrease in host protein synthesis. Also, after the onset of viral transcription, accelerates the turnover of viral mRNA, thereby facilitating the sequential expression of different classes of viral genes. Binds translation initiation factors eIF4H, eIF4AI, and eIF4AII, thereby may interact directly with the translation initiation complex and thus digest specifically mRNAs. Also impedes antigen presentation by major histocompatibility complex class I and class II molecules, inhibits secretion of cytokines that would otherwise recruit lymphocytes and neutrophils cells to the site of infection and blocks the activation of dendritic cells. Impedes the alpha/beta interferon-mediated response to infection by evading the cGAS/ STING-mediated DNA-sensing pathway and degrading CGAS via its RNase activity. The sequence is that of Virion host shutoff protein (UL41) from Human herpesvirus 1 (strain KOS) (HHV-1).